Reading from the N-terminus, the 287-residue chain is Elongation factor Ts (287 aa).

An involved in Mg(2+) ion dislocation from EF-Tu region spans residues 81-84 (TDFV).

It belongs to the EF-Ts family.

The protein resides in the cytoplasm. In terms of biological role, associates with the EF-Tu.GDP complex and induces the exchange of GDP to GTP. It remains bound to the aminoacyl-tRNA.EF-Tu.GTP complex up to the GTP hydrolysis stage on the ribosome. This is Elongation factor Ts from Nitratidesulfovibrio vulgaris (strain ATCC 29579 / DSM 644 / CCUG 34227 / NCIMB 8303 / VKM B-1760 / Hildenborough) (Desulfovibrio vulgaris).